Here is a 254-residue protein sequence, read N- to C-terminus: 3-deoxy-manno-octulosonate cytidylyltransferase (254 aa).

This sequence belongs to the KdsB family.

The protein localises to the cytoplasm. It catalyses the reaction 3-deoxy-alpha-D-manno-oct-2-ulosonate + CTP = CMP-3-deoxy-beta-D-manno-octulosonate + diphosphate. The protein operates within nucleotide-sugar biosynthesis; CMP-3-deoxy-D-manno-octulosonate biosynthesis; CMP-3-deoxy-D-manno-octulosonate from 3-deoxy-D-manno-octulosonate and CTP: step 1/1. Its pathway is bacterial outer membrane biogenesis; lipopolysaccharide biosynthesis. In terms of biological role, activates KDO (a required 8-carbon sugar) for incorporation into bacterial lipopolysaccharide in Gram-negative bacteria. The sequence is that of 3-deoxy-manno-octulosonate cytidylyltransferase from Bordetella parapertussis (strain 12822 / ATCC BAA-587 / NCTC 13253).